A 67-amino-acid chain; its full sequence is Prokaryotic ubiquitin-like protein Pup (67 aa).

The segment covering 1–13 (MAGQEQQQPQSRD) has biased composition (low complexity). The segment at 1–48 (MAGQEQQQPQSRDSQVDEDIPEAPPAPPEAQASASTEGVDDLLDEIDG) is disordered. Residues 25–61 (PAPPEAQASASTEGVDDLLDEIDGVLESNAEEFVRAF) form an ARC ATPase binding region. A compositionally biased stretch (acidic residues) spans 38 to 48 (GVDDLLDEIDG). Gln-67 is subject to Deamidated glutamine. Gln-67 participates in a covalent cross-link: Isoglutamyl lysine isopeptide (Gln-Lys) (interchain with K-? in acceptor proteins).

It belongs to the prokaryotic ubiquitin-like protein family. As to quaternary structure, strongly interacts with the proteasome-associated ATPase ARC through a hydrophobic interface; the interacting region of Pup lies in its C-terminal half. There is one Pup binding site per ARC hexamer ring. In terms of processing, is modified by deamidation of its C-terminal glutamine to glutamate by the deamidase Dop, a prerequisite to the subsequent pupylation process.

The protein operates within protein degradation; proteasomal Pup-dependent pathway. Functionally, protein modifier that is covalently attached to lysine residues of substrate proteins, thereby targeting them for proteasomal degradation. The tagging system is termed pupylation. In Pseudarthrobacter chlorophenolicus (strain ATCC 700700 / DSM 12829 / CIP 107037 / JCM 12360 / KCTC 9906 / NCIMB 13794 / A6) (Arthrobacter chlorophenolicus), this protein is Prokaryotic ubiquitin-like protein Pup.